We begin with the raw amino-acid sequence, 267 residues long: Formamidopyrimidine-DNA glycosylase (267 aa).

P2 serves as the catalytic Schiff-base intermediate with DNA. E3 serves as the catalytic Proton donor. K53 serves as the catalytic Proton donor; for beta-elimination activity. Residues H82 and R100 each coordinate DNA. Residues 230–264 form an FPG-type zinc finger; the sequence is AVYGREGLPCPACGRPVERRVVAGRGTHFCPTCQG. The active-site Proton donor; for delta-elimination activity is the R254.

This sequence belongs to the FPG family. Monomer. Zn(2+) serves as cofactor.

The catalysed reaction is Hydrolysis of DNA containing ring-opened 7-methylguanine residues, releasing 2,6-diamino-4-hydroxy-5-(N-methyl)formamidopyrimidine.. It carries out the reaction 2'-deoxyribonucleotide-(2'-deoxyribose 5'-phosphate)-2'-deoxyribonucleotide-DNA = a 3'-end 2'-deoxyribonucleotide-(2,3-dehydro-2,3-deoxyribose 5'-phosphate)-DNA + a 5'-end 5'-phospho-2'-deoxyribonucleoside-DNA + H(+). Its function is as follows. Involved in base excision repair of DNA damaged by oxidation or by mutagenic agents. Acts as a DNA glycosylase that recognizes and removes damaged bases. Has a preference for oxidized purines, such as 7,8-dihydro-8-oxoguanine (8-oxoG). Has AP (apurinic/apyrimidinic) lyase activity and introduces nicks in the DNA strand. Cleaves the DNA backbone by beta-delta elimination to generate a single-strand break at the site of the removed base with both 3'- and 5'-phosphates. The protein is Formamidopyrimidine-DNA glycosylase of Thermus thermophilus (strain ATCC BAA-163 / DSM 7039 / HB27).